The primary structure comprises 740 residues: Putative Pol polyprotein from transposon element Bs1 (740 aa).

The PPR repeat unit spans residues 469–503 (TAVAHNLLVQALFMDGRASDAYVVLEEMQNNGPFP).

Functionally, bs1 is probably an active plant retrotransposon. This chain is Putative Pol polyprotein from transposon element Bs1, found in Zea mays (Maize).